The chain runs to 658 residues: Threonine--tRNA ligase (658 aa).

Residues methionine 1–glutamate 61 enclose the TGS domain. The interval aspartate 259–proline 554 is catalytic. Zn(2+)-binding residues include cysteine 353, histidine 404, and histidine 531.

This sequence belongs to the class-II aminoacyl-tRNA synthetase family. As to quaternary structure, homodimer. It depends on Zn(2+) as a cofactor.

It localises to the cytoplasm. The enzyme catalyses tRNA(Thr) + L-threonine + ATP = L-threonyl-tRNA(Thr) + AMP + diphosphate + H(+). Its function is as follows. Catalyzes the attachment of threonine to tRNA(Thr) in a two-step reaction: L-threonine is first activated by ATP to form Thr-AMP and then transferred to the acceptor end of tRNA(Thr). Also edits incorrectly charged L-seryl-tRNA(Thr). This chain is Threonine--tRNA ligase, found in Streptomyces coelicolor (strain ATCC BAA-471 / A3(2) / M145).